Here is a 406-residue protein sequence, read N- to C-terminus: Imidazolonepropionase (406 aa).

Residues His-67 and His-69 each coordinate Fe(3+). Zn(2+) contacts are provided by His-67 and His-69. Positions 76, 139, and 172 each coordinate 4-imidazolone-5-propanoate. An N-formimidoyl-L-glutamate-binding site is contributed by Tyr-139. Fe(3+) is bound at residue His-237. His-237 contacts Zn(2+). Gln-240 contacts 4-imidazolone-5-propanoate. Asp-312 contacts Fe(3+). Asp-312 is a Zn(2+) binding site. N-formimidoyl-L-glutamate is bound by residues Asn-314 and Gly-316. Thr-317 lines the 4-imidazolone-5-propanoate pocket.

Belongs to the metallo-dependent hydrolases superfamily. HutI family. It depends on Zn(2+) as a cofactor. Requires Fe(3+) as cofactor.

It is found in the cytoplasm. It catalyses the reaction 4-imidazolone-5-propanoate + H2O = N-formimidoyl-L-glutamate. The protein operates within amino-acid degradation; L-histidine degradation into L-glutamate; N-formimidoyl-L-glutamate from L-histidine: step 3/3. Catalyzes the hydrolytic cleavage of the carbon-nitrogen bond in imidazolone-5-propanoate to yield N-formimidoyl-L-glutamate. It is the third step in the universal histidine degradation pathway. The chain is Imidazolonepropionase from Paraburkholderia phymatum (strain DSM 17167 / CIP 108236 / LMG 21445 / STM815) (Burkholderia phymatum).